Reading from the N-terminus, the 161-residue chain is MEKPLTVLRVSLYHPTLGPSAFANVPPRLQHDTSPLLLGRGQDAHLQLQLPRLSRRHLSLEPYLEKGSALLAFCLKALSRKGCVWVNGLTLRYLEQVPLSTVNRVSFSGIQMLVRVEEGTSLEAFVCYFHVSPSPLIYRPEAEETDEWEGISQGQPPPGSG.

Positions 36 to 91 constitute an FHA domain; the sequence is LLLGRGQDAHLQLQLPRLSRRHLSLEPYLEKGSALLAFCLKALSRKGCVWVNGLTL.

Interacts with TIFA.

Its function is as follows. Inhibits TIFA-mediated TRAF6 activation possibly by inducing a conformational change in TIFA. The polypeptide is TRAF-interacting protein with FHA domain-containing protein B (Homo sapiens (Human)).